The primary structure comprises 83 residues: Neurotoxin 3FTx-RI (83 aa).

The N-terminal stretch at 1–21 (MKTLLLTLVVLTIVCLDLGHT) is a signal peptide. 4 disulfide bridges follow: C24–C45, C38–C62, C64–C75, and C76–C81.

Belongs to the three-finger toxin family. Short-chain subfamily. Type I alpha-neurotoxin sub-subfamily. Expressed by the venom gland.

The protein localises to the secreted. Binds to muscle nicotinic acetylcholine receptor (nAChR) and inhibit acetylcholine from binding to the receptor, thereby impairing neuromuscular transmission. This is Neurotoxin 3FTx-RI from Bungarus fasciatus (Banded krait).